A 215-amino-acid chain; its full sequence is E3 ubiquitin-protein ligase znrf1 (215 aa).

Disordered stretches follow at residues 1–39 (MGGK…PGGT) and 66–96 (YTPR…ETGG). G2 is lipidated: N-myristoyl glycine. The segment at 172 to 213 (CVICLEELQQGDTIARLPCLCIYHKSCIDSWFEINRSCPEHP) adopts an RING-type; atypical zinc-finger fold.

The protein resides in the endosome. The protein localises to the lysosome. Its subcellular location is the membrane. The enzyme catalyses S-ubiquitinyl-[E2 ubiquitin-conjugating enzyme]-L-cysteine + [acceptor protein]-L-lysine = [E2 ubiquitin-conjugating enzyme]-L-cysteine + N(6)-ubiquitinyl-[acceptor protein]-L-lysine.. The protein operates within protein modification; protein ubiquitination. E3 ubiquitin-protein ligase that plays a role in neuron cells differentiation. Plays a role in the establishment and maintenance of neuronal transmission and plasticity. This Danio rerio (Zebrafish) protein is E3 ubiquitin-protein ligase znrf1 (znrf1).